We begin with the raw amino-acid sequence, 162 residues long: 2-C-methyl-D-erythritol 2,4-cyclodiphosphate synthase (162 aa).

Asp12 and His14 together coordinate a divalent metal cation. 4-CDP-2-C-methyl-D-erythritol 2-phosphate is bound by residues 12-14 and 38-39; these read DVH and HS. His46 serves as a coordination point for a divalent metal cation. 4-CDP-2-C-methyl-D-erythritol 2-phosphate contacts are provided by residues 60 to 62, 65 to 69, and Arg146; these read DIG and FPDTD.

Belongs to the IspF family. In terms of assembly, homotrimer. A divalent metal cation is required as a cofactor.

The enzyme catalyses 4-CDP-2-C-methyl-D-erythritol 2-phosphate = 2-C-methyl-D-erythritol 2,4-cyclic diphosphate + CMP. It participates in isoprenoid biosynthesis; isopentenyl diphosphate biosynthesis via DXP pathway; isopentenyl diphosphate from 1-deoxy-D-xylulose 5-phosphate: step 4/6. In terms of biological role, involved in the biosynthesis of isopentenyl diphosphate (IPP) and dimethylallyl diphosphate (DMAPP), two major building blocks of isoprenoid compounds. Catalyzes the conversion of 4-diphosphocytidyl-2-C-methyl-D-erythritol 2-phosphate (CDP-ME2P) to 2-C-methyl-D-erythritol 2,4-cyclodiphosphate (ME-CPP) with a corresponding release of cytidine 5-monophosphate (CMP). The protein is 2-C-methyl-D-erythritol 2,4-cyclodiphosphate synthase of Bordetella petrii (strain ATCC BAA-461 / DSM 12804 / CCUG 43448).